A 185-amino-acid polypeptide reads, in one-letter code: Ribosome-recycling factor (185 aa).

It belongs to the RRF family.

Its subcellular location is the cytoplasm. In terms of biological role, responsible for the release of ribosomes from messenger RNA at the termination of protein biosynthesis. May increase the efficiency of translation by recycling ribosomes from one round of translation to another. The polypeptide is Ribosome-recycling factor (Hydrogenovibrio crunogenus (strain DSM 25203 / XCL-2) (Thiomicrospira crunogena)).